We begin with the raw amino-acid sequence, 494 residues long: Tripartite motif-containing protein 5 (494 aa).

N-acetylalanine is present on Ala2. Residues 15–59 form an RING-type zinc finger; that stretch reads CPICLELLTQPLSLDCGHSFCQACLTANHKTSMPDEGERSCPVCR. Residue Ser86 is modified to Phosphoserine. Residues 91 to 133 form a B box-type zinc finger; that stretch reads QKVDHCARHGEKLLLFCQEDRKVICWLCERSQEHRGHHTFLTE. 4 residues coordinate Zn(2+): Cys96, His99, Cys118, and His124. Residues 132–241 adopt a coiled-coil conformation; sequence TEEVAQEYQV…LISDLEHRLQ (110 aa). The interval 186 to 199 is required for interaction with GABARAP and for autophagy; that stretch reads FEQLRHILDWVESN. The B30.2/SPRY domain occupies 282–494; that stretch reads LKVMLEVLRE…VPMTLCSPSS (213 aa).

The protein belongs to the TRIM/RBCC family. In terms of assembly, can form homodimers and homotrimers. In addition to lower-order dimerization, also exhibits a higher-order multimerization and both low- and high-order multimerizations are essential for its restriction activity. Interacts with BTBD1 and BTBD2. Interacts with PSMC4, PSMC5, PSMD7 and HSPA8/HSC70. Interacts (via B30.2/SPRY domain) with HSPA1A/B. Interacts with PSMC2, MAP3K7/TAK1, TAB2 and TAB3. Interacts with SQSTM1. Interacts with TRIM6 and TRIM34. Interacts with ULK1 (phosphorylated form), GABARAP, GABARAPL1, GABARAPL2, MAP1LC3A, MAP1LC3C and BECN1. In terms of processing, degraded in a proteasome-independent fashion in the absence of viral infection but in a proteasome-dependent fashion following exposure to restriction sensitive virus. Post-translationally, autoubiquitinated in a RING finger- and UBE2D2-dependent manner. Monoubiquitinated by TRIM21. Deubiquitinated by Yersinia YopJ. Ubiquitination may not lead to proteasomal degradation.

It localises to the cytoplasm. It is found in the nucleus. It carries out the reaction S-ubiquitinyl-[E2 ubiquitin-conjugating enzyme]-L-cysteine + [acceptor protein]-L-lysine = [E2 ubiquitin-conjugating enzyme]-L-cysteine + N(6)-ubiquitinyl-[acceptor protein]-L-lysine.. The protein operates within protein modification; protein ubiquitination. Capsid-specific restriction factor that prevents infection from non-host-adapted retroviruses. Blocks viral replication early in the life cycle, after viral entry but before reverse transcription. In addition to acting as a capsid-specific restriction factor, also acts as a pattern recognition receptor that activates innate immune signaling in response to the retroviral capsid lattice. Binding to the viral capsid triggers its E3 ubiquitin ligase activity, and in concert with the heterodimeric ubiquitin conjugating enzyme complex UBE2V1-UBE2N (also known as UBC13-UEV1A complex) generates 'Lys-63'-linked polyubiquitin chains, which in turn are catalysts in the autophosphorylation of the MAP3K7/TAK1 complex (includes TAK1, TAB2, and TAB3). Activation of the MAP3K7/TAK1 complex by autophosphorylation results in the induction and expression of NF-kappa-B and MAPK-responsive inflammatory genes, thereby leading to an innate immune response in the infected cell. Plays a role in regulating autophagy through activation of autophagy regulator BECN1 by causing its dissociation from its inhibitors BCL2 and TAB2. In Symphalangus syndactylus (Siamang), this protein is Tripartite motif-containing protein 5 (TRIM5).